Consider the following 461-residue polypeptide: Siroheme synthase (461 aa).

The precorrin-2 dehydrogenase /sirohydrochlorin ferrochelatase stretch occupies residues 1-204; sequence MDYFPIFCQL…GDTTQAQQQV (204 aa). NAD(+)-binding positions include 22 to 23 and 43 to 44; these read EV and GR. Phosphoserine is present on Ser-128. A uroporphyrinogen-III C-methyltransferase region spans residues 216–461; sequence GEVTLVGAGP…NWFRCEAASA (246 aa). Pro-225 contributes to the S-adenosyl-L-methionine binding site. The active-site Proton acceptor is Asp-248. Lys-270 acts as the Proton donor in catalysis. S-adenosyl-L-methionine-binding positions include 301–303, Ile-306, 331–332, Met-382, and Gly-411; these read GGD and TA.

In the N-terminal section; belongs to the precorrin-2 dehydrogenase / sirohydrochlorin ferrochelatase family. It in the C-terminal section; belongs to the precorrin methyltransferase family.

It carries out the reaction uroporphyrinogen III + 2 S-adenosyl-L-methionine = precorrin-2 + 2 S-adenosyl-L-homocysteine + H(+). It catalyses the reaction precorrin-2 + NAD(+) = sirohydrochlorin + NADH + 2 H(+). The enzyme catalyses siroheme + 2 H(+) = sirohydrochlorin + Fe(2+). Its pathway is cofactor biosynthesis; adenosylcobalamin biosynthesis; precorrin-2 from uroporphyrinogen III: step 1/1. The protein operates within cofactor biosynthesis; adenosylcobalamin biosynthesis; sirohydrochlorin from precorrin-2: step 1/1. It functions in the pathway porphyrin-containing compound metabolism; siroheme biosynthesis; precorrin-2 from uroporphyrinogen III: step 1/1. It participates in porphyrin-containing compound metabolism; siroheme biosynthesis; siroheme from sirohydrochlorin: step 1/1. Its pathway is porphyrin-containing compound metabolism; siroheme biosynthesis; sirohydrochlorin from precorrin-2: step 1/1. In terms of biological role, multifunctional enzyme that catalyzes the SAM-dependent methylations of uroporphyrinogen III at position C-2 and C-7 to form precorrin-2 via precorrin-1. Then it catalyzes the NAD-dependent ring dehydrogenation of precorrin-2 to yield sirohydrochlorin. Finally, it catalyzes the ferrochelation of sirohydrochlorin to yield siroheme. This Edwardsiella ictaluri (strain 93-146) protein is Siroheme synthase.